A 194-amino-acid chain; its full sequence is Small ribosomal subunit protein uS4c (194 aa).

The disordered stretch occupies residues 1–29 (RFKKIRRLGTLPGLTSKRPRSGSDLKNPL). Residues 82-143 (MRLDNILFRL…KQRSKALIQN (62 aa)) form the S4 RNA-binding domain.

This sequence belongs to the universal ribosomal protein uS4 family. Part of the 30S ribosomal subunit. Contacts protein S5. The interaction surface between S4 and S5 is involved in control of translational fidelity.

The protein localises to the plastid. Its subcellular location is the chloroplast. In terms of biological role, one of the primary rRNA binding proteins, it binds directly to 16S rRNA where it nucleates assembly of the body of the 30S subunit. Its function is as follows. With S5 and S12 plays an important role in translational accuracy. This is Small ribosomal subunit protein uS4c (rps4) from Furcraea foetida (Mauritius hemp).